The sequence spans 434 residues: Trigger factor (434 aa).

Residues 161–246 (EDRATIDFSG…LKKVEERELP (86 aa)) form the PPIase FKBP-type domain.

The protein belongs to the FKBP-type PPIase family. Tig subfamily.

The protein localises to the cytoplasm. It carries out the reaction [protein]-peptidylproline (omega=180) = [protein]-peptidylproline (omega=0). Functionally, involved in protein export. Acts as a chaperone by maintaining the newly synthesized protein in an open conformation. Functions as a peptidyl-prolyl cis-trans isomerase. This chain is Trigger factor, found in Erwinia tasmaniensis (strain DSM 17950 / CFBP 7177 / CIP 109463 / NCPPB 4357 / Et1/99).